Consider the following 1890-residue polypeptide: Putative aminopeptidase-2 (1890 aa).

An N-terminal signal peptide occupies residues 1–20 (MRRKLLLLLCFIGLFSLIST). An N-linked (GlcNAc...) asparagine glycan is attached at asparagine 110. Substrate contacts are provided by residues glutamate 220 and 354–358 (GAMEN). Histidine 390 lines the Zn(2+) pocket. Residue glutamate 391 is the Proton acceptor of the active site. Residues histidine 394 and glutamate 413 each contribute to the Zn(2+) site. Asparagine 534, asparagine 581, asparagine 785, asparagine 803, asparagine 914, asparagine 1024, and asparagine 1094 each carry an N-linked (GlcNAc...) asparagine glycan. Glutamate 1143 is a substrate binding site. Residue asparagine 1245 is glycosylated (N-linked (GlcNAc...) asparagine). 1280-1284 (GAMEN) lines the substrate pocket. Residue histidine 1316 participates in Zn(2+) binding. The active-site Proton acceptor is glutamate 1317. Residues histidine 1320 and glutamate 1339 each coordinate Zn(2+). Residues asparagine 1451, asparagine 1521, asparagine 1826, and asparagine 1841 are each glycosylated (N-linked (GlcNAc...) asparagine).

This sequence belongs to the peptidase M1 family. The cofactor is Zn(2+).

Putative aminopeptidase which plays a role in oocyte maturation. The polypeptide is Putative aminopeptidase-2 (Caenorhabditis elegans).